The following is a 391-amino-acid chain: Chaperone protein DnaJ (391 aa).

One can recognise a J domain in the interval Asp2–Gly67. The segment at Gly148–Lys226 adopts a CR-type zinc-finger fold. Positions 161, 164, 178, 181, 200, 203, 214, and 217 each coordinate Zn(2+). CXXCXGXG motif repeat units follow at residues Cys161–Gly168, Cys178–Gly185, Cys200–Gly207, and Cys214–Gly221.

Belongs to the DnaJ family. As to quaternary structure, homodimer. It depends on Zn(2+) as a cofactor.

It localises to the cytoplasm. Functionally, participates actively in the response to hyperosmotic and heat shock by preventing the aggregation of stress-denatured proteins and by disaggregating proteins, also in an autonomous, DnaK-independent fashion. Unfolded proteins bind initially to DnaJ; upon interaction with the DnaJ-bound protein, DnaK hydrolyzes its bound ATP, resulting in the formation of a stable complex. GrpE releases ADP from DnaK; ATP binding to DnaK triggers the release of the substrate protein, thus completing the reaction cycle. Several rounds of ATP-dependent interactions between DnaJ, DnaK and GrpE are required for fully efficient folding. Also involved, together with DnaK and GrpE, in the DNA replication of plasmids through activation of initiation proteins. The protein is Chaperone protein DnaJ of Chlamydia felis (strain Fe/C-56) (Chlamydophila felis).